The chain runs to 223 residues: Deoxyribose-phosphate aldolase (223 aa).

The Proton donor/acceptor role is filled by Asp89. Lys152 acts as the Schiff-base intermediate with acetaldehyde in catalysis. Lys181 serves as the catalytic Proton donor/acceptor.

It belongs to the DeoC/FbaB aldolase family. DeoC type 1 subfamily.

It localises to the cytoplasm. The catalysed reaction is 2-deoxy-D-ribose 5-phosphate = D-glyceraldehyde 3-phosphate + acetaldehyde. It participates in carbohydrate degradation; 2-deoxy-D-ribose 1-phosphate degradation; D-glyceraldehyde 3-phosphate and acetaldehyde from 2-deoxy-alpha-D-ribose 1-phosphate: step 2/2. Catalyzes a reversible aldol reaction between acetaldehyde and D-glyceraldehyde 3-phosphate to generate 2-deoxy-D-ribose 5-phosphate. This chain is Deoxyribose-phosphate aldolase, found in Bacillus subtilis (strain 168).